A 128-amino-acid chain; its full sequence is MKRGSAALEVRELKMQTPTASCVLSTQRANFAKGGVPTDDEQATGLEREVMMAARKGLDPYNILAPKAAAGTKEDPNLVPSITNKRIVGCICEEDNSTVIWFWLHKGEAQRCPSCGTHYKLVPHQLAH.

A mitochondrion-targeting transit peptide spans 1–30; that stretch reads MKRGSAALEVRELKMQTPTASCVLSTQRAN. An N6-acetyllysine mark is found at K67 and K85. Residues C90, C92, C112, and C115 each contribute to the Zn(2+) site. The residue at position 120 (K120) is an N6-acetyllysine.

Belongs to the cytochrome c oxidase 5b family. As to expression, expressed in testis. Not expressed in brain, heart, liver, kidney, spleen, lung, duodenum, muscle, epididymis, vagina, uterus and ovary.

It is found in the mitochondrion inner membrane. Functionally, this protein is one of the nuclear-coded polypeptide chains of cytochrome c oxidase, the terminal oxidase in mitochondrial electron transport. In Vulpes vulpes (Red fox), this protein is Cytochrome c oxidase subunit 5B, mitochondrial.